Reading from the N-terminus, the 315-residue chain is uncharacterized protein (315 aa).

This is an uncharacterized protein from Homo sapiens (Human).